An 878-amino-acid polypeptide reads, in one-letter code: Alanine--tRNA ligase (878 aa).

Zn(2+) contacts are provided by histidine 567, histidine 571, cysteine 669, and histidine 673.

It belongs to the class-II aminoacyl-tRNA synthetase family. Zn(2+) is required as a cofactor.

The protein localises to the cytoplasm. It catalyses the reaction tRNA(Ala) + L-alanine + ATP = L-alanyl-tRNA(Ala) + AMP + diphosphate. Catalyzes the attachment of alanine to tRNA(Ala) in a two-step reaction: alanine is first activated by ATP to form Ala-AMP and then transferred to the acceptor end of tRNA(Ala). Also edits incorrectly charged Ser-tRNA(Ala) and Gly-tRNA(Ala) via its editing domain. This is Alanine--tRNA ligase from Rickettsia massiliae (strain Mtu5).